The sequence spans 55 residues: Large ribosomal subunit protein bL33 (55 aa).

A compositionally biased stretch (basic and acidic residues) spans 1 to 11 (MAKGGREKIKL). A disordered region spans residues 1 to 29 (MAKGGREKIKLESTAGTGHFYTTTKNKKT). Polar residues predominate over residues 14–24 (TAGTGHFYTTT).

This sequence belongs to the bacterial ribosomal protein bL33 family.

This is Large ribosomal subunit protein bL33 from Thiobacillus denitrificans (strain ATCC 25259 / T1).